The chain runs to 202 residues: Recombination protein RecR (202 aa).

The C4-type zinc finger occupies 61 to 76 (CARCNSFTEDDICATC). Positions 84-179 (SVLCVVETPA…KVTRLARGVP (96 aa)) constitute a Toprim domain.

The protein belongs to the RecR family.

Its function is as follows. May play a role in DNA repair. It seems to be involved in an RecBC-independent recombinational process of DNA repair. It may act with RecF and RecO. This chain is Recombination protein RecR, found in Bordetella petrii (strain ATCC BAA-461 / DSM 12804 / CCUG 43448).